The chain runs to 634 residues: DNA gyrase subunit B (634 aa).

The region spanning 416–530 (REIYIVEGDS…NGYIYIAMPP (115 aa)) is the Toprim domain. Mg(2+) is bound by residues Glu-422, Asp-495, and Asp-497.

The protein belongs to the type II topoisomerase GyrB family. Heterotetramer, composed of two GyrA and two GyrB chains. In the heterotetramer, GyrA contains the active site tyrosine that forms a transient covalent intermediate with DNA, while GyrB binds cofactors and catalyzes ATP hydrolysis. Mg(2+) is required as a cofactor. It depends on Mn(2+) as a cofactor. Ca(2+) serves as cofactor.

It localises to the cytoplasm. The catalysed reaction is ATP-dependent breakage, passage and rejoining of double-stranded DNA.. Its function is as follows. A type II topoisomerase that negatively supercoils closed circular double-stranded (ds) DNA in an ATP-dependent manner to modulate DNA topology and maintain chromosomes in an underwound state. Negative supercoiling favors strand separation, and DNA replication, transcription, recombination and repair, all of which involve strand separation. Also able to catalyze the interconversion of other topological isomers of dsDNA rings, including catenanes and knotted rings. Type II topoisomerases break and join 2 DNA strands simultaneously in an ATP-dependent manner. The chain is DNA gyrase subunit B from Borreliella burgdorferi (strain ATCC 35210 / DSM 4680 / CIP 102532 / B31) (Borrelia burgdorferi).